The primary structure comprises 145 residues: Basic phospholipase A2 beta-bungarotoxin A-AL1 chain (145 aa).

The signal sequence occupies residues 1-17 (MLIFLWCGAVCVSLLGA). Positions 18–25 (ANIPPHPL) are excised as a propeptide. 5 disulfide bridges follow: Cys-52/Cys-144, Cys-54/Cys-70, Cys-76/Cys-118, Cys-86/Cys-111, and Cys-104/Cys-116. Residues Tyr-53, Gly-55, and Gly-57 each coordinate Ca(2+). The active site involves His-73. The active site involves Asp-119.

This sequence belongs to the phospholipase A2 family. Group I subfamily. G49 sub-subfamily. In terms of assembly, heterodimer; disulfide-linked. The A chains have phospholipase A2 activity and the B chains show homology with the basic protease inhibitors. It depends on Ca(2+) as a cofactor. This enzyme lacks one of the seven disulfide bonds found in similar PLA2 proteins. In terms of tissue distribution, expressed by the venom gland.

Its subcellular location is the secreted. It carries out the reaction a 1,2-diacyl-sn-glycero-3-phosphocholine + H2O = a 1-acyl-sn-glycero-3-phosphocholine + a fatty acid + H(+). Its function is as follows. Snake venom phospholipase A2 (PLA2) that inhibits neuromuscular transmission by blocking acetylcholine release from the nerve termini. PLA2 catalyzes the calcium-dependent hydrolysis of the 2-acyl groups in 3-sn-phosphoglycerides. This chain is Basic phospholipase A2 beta-bungarotoxin A-AL1 chain, found in Bungarus multicinctus (Many-banded krait).